Consider the following 449-residue polypeptide: Exodeoxyribonuclease 7 large subunit (449 aa).

It belongs to the XseA family. As to quaternary structure, heterooligomer composed of large and small subunits.

The protein resides in the cytoplasm. It carries out the reaction Exonucleolytic cleavage in either 5'- to 3'- or 3'- to 5'-direction to yield nucleoside 5'-phosphates.. Functionally, bidirectionally degrades single-stranded DNA into large acid-insoluble oligonucleotides, which are then degraded further into small acid-soluble oligonucleotides. In Salmonella agona (strain SL483), this protein is Exodeoxyribonuclease 7 large subunit.